The primary structure comprises 265 residues: Very long chain fatty acid elongase 6 (265 aa).

Asn2 is a glycosylation site (N-linked (GlcNAc...) asparagine). A run of 7 helical transmembrane segments spans residues 34 to 51 (FLFS…RHLM), 70 to 90 (LAVF…YILM), 111 to 131 (FWAY…IFII), 137 to 156 (LIFL…WYSY), 159 to 179 (MVAG…VMYS), 197 to 217 (FITL…YLVF), and 232 to 252 (IIWS…FFFE).

The protein belongs to the ELO family. ELOVL6 subfamily. N-Glycosylated.

The protein localises to the endoplasmic reticulum membrane. It catalyses the reaction a very-long-chain acyl-CoA + malonyl-CoA + H(+) = a very-long-chain 3-oxoacyl-CoA + CO2 + CoA. It carries out the reaction hexadecanoyl-CoA + malonyl-CoA + H(+) = 3-oxooctadecanoyl-CoA + CO2 + CoA. The catalysed reaction is (9Z)-hexadecenoyl-CoA + malonyl-CoA + H(+) = 3-oxo-(11Z)-octadecenoyl-CoA + CO2 + CoA. The enzyme catalyses dodecanoyl-CoA + malonyl-CoA + H(+) = 3-oxotetradecanoyl-CoA + CO2 + CoA. It catalyses the reaction tetradecanoyl-CoA + malonyl-CoA + H(+) = 3-oxohexadecanoyl-CoA + CO2 + CoA. It carries out the reaction (9Z)-octadecenoyl-CoA + malonyl-CoA + H(+) = 3-oxo-(11Z)-eicosenoyl-CoA + CO2 + CoA. The catalysed reaction is (9Z,12Z)-octadecadienoyl-CoA + malonyl-CoA + H(+) = (11Z,14Z)-3-oxoicosa-11,14-dienoyl-CoA + CO2 + CoA. The enzyme catalyses (9Z,12Z,15Z)-octadecatrienoyl-CoA + malonyl-CoA + H(+) = (11Z,14Z,17Z)-3-oxoeicosatrienoyl-CoA + CO2 + CoA. It functions in the pathway lipid metabolism; fatty acid biosynthesis. The reaction is stimulated by the presence of HSD17B12, the enzyme catalyzing the second step of the elongation cycle. Catalyzes the first and rate-limiting reaction of the four reactions that constitute the long-chain fatty acids elongation cycle. This endoplasmic reticulum-bound enzymatic process allows the addition of 2 carbons to the chain of long- and very long-chain fatty acids (VLCFAs) per cycle. Condensing enzyme that elongates fatty acids with 12, 14 and 16 carbons with higher activity toward C16:0 acyl-CoAs. Catalyzes the synthesis of unsaturated C16 long chain fatty acids and, to a lesser extent, C18:0 and those with low desaturation degree. May participate in the production of saturated and monounsaturated VLCFAs of different chain lengths that are involved in multiple biological processes as precursors of membrane lipids and lipid mediators. The sequence is that of Very long chain fatty acid elongase 6 from Gallus gallus (Chicken).